The primary structure comprises 179 residues: Large ribosomal subunit protein uL5 (179 aa).

Lysine 3 is subject to N6-acetyllysine.

Belongs to the universal ribosomal protein uL5 family. Part of the 50S ribosomal subunit; part of the 5S rRNA/L5/L18/L25 subcomplex. Contacts the 5S rRNA and the P site tRNA. Forms a bridge to the 30S subunit in the 70S ribosome.

Its function is as follows. This is one of the proteins that bind and probably mediate the attachment of the 5S RNA into the large ribosomal subunit, where it forms part of the central protuberance. In the 70S ribosome it contacts protein S13 of the 30S subunit (bridge B1b), connecting the 2 subunits; this bridge is implicated in subunit movement. Contacts the P site tRNA; the 5S rRNA and some of its associated proteins might help stabilize positioning of ribosome-bound tRNAs. This chain is Large ribosomal subunit protein uL5, found in Escherichia coli O45:K1 (strain S88 / ExPEC).